The sequence spans 179 residues: Large ribosomal subunit protein uL6 (179 aa).

Belongs to the universal ribosomal protein uL6 family. In terms of assembly, part of the 50S ribosomal subunit.

Its function is as follows. This protein binds to the 23S rRNA, and is important in its secondary structure. It is located near the subunit interface in the base of the L7/L12 stalk, and near the tRNA binding site of the peptidyltransferase center. The polypeptide is Large ribosomal subunit protein uL6 (Mycobacterium tuberculosis (strain ATCC 25618 / H37Rv)).